Here is a 668-residue protein sequence, read N- to C-terminus: Protein PLASTID TRANSCRIPTIONALLY ACTIVE 10 (668 aa).

The N-terminal 40 residues, 1–40, are a transit peptide targeting the chloroplast; that stretch reads MQICQTKLNFTFPNPTNPNFCKPKALQWSPPRRISLLPCR. Positions 272–340 constitute an S1 motif domain; it reads GMVCEGTVTT…YRFRFPLELR (69 aa). A compositionally biased stretch (basic and acidic residues) spans 362-391; it reads RDGDTNPDEIRRDCGRPPEPRKDPGSKPEE. The disordered stretch occupies residues 362 to 394; that stretch reads RDGDTNPDEIRRDCGRPPEPRKDPGSKPEEEGL. At serine 434 the chain carries Phosphoserine. The tract at residues 611 to 668 is disordered; that stretch reads KRKEGSTLASQEEETESEEEEEDDDDFDDFDYSILSDESSIGYSEQQPLVNGTQVLTD. The segment covering 621-641 has biased composition (acidic residues); it reads QEEETESEEEEEDDDDFDDFD. Residues 646 to 668 are compositionally biased toward polar residues; sequence SDESSIGYSEQQPLVNGTQVLTD.

In terms of assembly, component of the transcriptionally active chromosome (TAC) complexes. Interacts with PTAC7.

Its subcellular location is the plastid. It is found in the chloroplast. The chain is Protein PLASTID TRANSCRIPTIONALLY ACTIVE 10 from Arabidopsis thaliana (Mouse-ear cress).